Reading from the N-terminus, the 82-residue chain is uncharacterized protein (82 aa).

The segment covering 1-11 (MKARGSRENAS) has biased composition (basic and acidic residues). A disordered region spans residues 1–25 (MKARGSRENASKRRPSQTQYDTHLR). Residues 16–25 (SQTQYDTHLR) show a composition bias toward polar residues.

This is an uncharacterized protein from Human cytomegalovirus (strain AD169) (HHV-5).